A 141-amino-acid chain; its full sequence is Hemoglobin subunit alpha-1/2 (141 aa).

One can recognise a Globin domain in the interval 1-141; it reads VLSPADKTNV…VSTVLTSKYR (141 aa). A Phosphoserine modification is found at Ser3. At Lys7 the chain carries N6-succinyllysine. Position 8 is a phosphothreonine (Thr8). Lys11 is modified (N6-succinyllysine). Lys16 is subject to N6-acetyllysine; alternate. The residue at position 16 (Lys16) is an N6-succinyllysine; alternate. Position 24 is a phosphotyrosine (Tyr24). Ser35 is modified (phosphoserine). Position 40 is an N6-succinyllysine (Lys40). Ser49 is modified (phosphoserine). Position 58 (His58) interacts with O2. His87 lines the heme b pocket. The residue at position 102 (Ser102) is a Phosphoserine. Residue Thr108 is modified to Phosphothreonine. 2 positions are modified to phosphoserine: Ser124 and Ser131. Phosphothreonine occurs at positions 134 and 137. Residue Ser138 is modified to Phosphoserine.

Belongs to the globin family. As to quaternary structure, heterotetramer of two alpha chains and two beta chains. As to expression, red blood cells.

Involved in oxygen transport from the lung to the various peripheral tissues. This Macaca speciosa (Stump-tail macaque) protein is Hemoglobin subunit alpha-1/2.